A 69-amino-acid polypeptide reads, in one-letter code: Large ribosomal subunit protein bL31 (69 aa).

Zn(2+) contacts are provided by Cys16, Cys18, Cys37, and Cys40.

The protein belongs to the bacterial ribosomal protein bL31 family. Type A subfamily. Part of the 50S ribosomal subunit. Zn(2+) is required as a cofactor.

In terms of biological role, binds the 23S rRNA. This Buchnera aphidicola subsp. Cinara cedri (strain Cc) protein is Large ribosomal subunit protein bL31.